The primary structure comprises 399 residues: Mycinamicin VI 2''-O-methyltransferase (399 aa).

Residues T173, 202-208, S217, D234, 252-253, and D275 each bind S-adenosyl-L-methionine; these read EIGVGGY and DQ. Position 275 (D275) interacts with Mg(2+). The active-site Proton acceptor is the H278. Mg(2+) is bound by residues E303 and D304.

This sequence belongs to the methyltransferase OleY/MycE family. In terms of assembly, homotetramer. Mg(2+) is required as a cofactor.

It catalyses the reaction mycinamicin VI + S-adenosyl-L-methionine = mycinamicin III + S-adenosyl-L-homocysteine + H(+). The protein operates within antibiotic biosynthesis; mycinamicin biosynthesis. O-methyltransferase that catalyzes the conversion of mycinamicin VI to mycinamicin III in the biosynthesis of mycinamicin, a 16-membered macrolide antibiotic. In Micromonospora griseorubida, this protein is Mycinamicin VI 2''-O-methyltransferase (mycE).